The sequence spans 647 residues: Acetyl-coenzyme A synthetase (647 aa).

CoA-binding positions include 189–192 (RGGK), Thr-307, and Asn-331. Residues 383–385 (GEP), 407–412 (DTWWQT), Asp-496, and Arg-511 each bind ATP. Residue Ser-519 participates in CoA binding. Arg-522 is a binding site for ATP. Positions 535 and 538 each coordinate Mg(2+). Arg-580 serves as a coordination point for CoA. Lys-605 bears the N6-acetyllysine mark.

Belongs to the ATP-dependent AMP-binding enzyme family. It depends on Mg(2+) as a cofactor. Post-translationally, acetylated. Deacetylation by the SIR2-homolog deacetylase activates the enzyme.

It catalyses the reaction acetate + ATP + CoA = acetyl-CoA + AMP + diphosphate. Catalyzes the conversion of acetate into acetyl-CoA (AcCoA), an essential intermediate at the junction of anabolic and catabolic pathways. AcsA undergoes a two-step reaction. In the first half reaction, AcsA combines acetate with ATP to form acetyl-adenylate (AcAMP) intermediate. In the second half reaction, it can then transfer the acetyl group from AcAMP to the sulfhydryl group of CoA, forming the product AcCoA. The chain is Acetyl-coenzyme A synthetase from Syntrophus aciditrophicus (strain SB).